We begin with the raw amino-acid sequence, 446 residues long: G patch domain-containing protein 4 (446 aa).

M1 carries the N-acetylmethionine modification. Residue T4 is modified to Phosphothreonine. Residues 11-57 enclose the G-patch domain; sequence GMKFAEEQLLKHGWTQGKGLGRKENGITQALRVTLKQDTHGVGHDPA. A Glycyl lysine isopeptide (Lys-Gly) (interchain with G-Cter in SUMO2) cross-link involves residue K46. Position 116 is a phosphothreonine (T116). Disordered stretches follow at residues 116-140 and 188-446; these read TSGGEKPNKDLESCSDDDNQGSKSP and QDPG…KKRD. Phosphoserine is present on residues S128, S130, and S139. Residues 166–251 adopt a coiled-coil conformation; that stretch reads TMKAKLARLE…KKKRRHQEGK (86 aa). Over residues 219 to 237 the composition is skewed to basic and acidic residues; that stretch reads ASERNDADEKHPEHAEQNI. Over residues 238-248 the composition is skewed to basic residues; sequence RKSKKKKRRHQ. 4 stretches are compositionally biased toward basic and acidic residues: residues 249–268, 297–328, 363–375, and 392–409; these read EGKVSDEREGTTKGNEKEDA, HHEEEKMGVLEEGGKGKEAAGSVRTEEVESRA, REAESRACSDGRS, and LDVRDEKDGGAREAESRA. 2 stretches are compositionally biased toward basic residues: residues 416 to 427 and 437 to 446; these read RGKRKRQQHPKK and KAKKKQKKRD.

The sequence is that of G patch domain-containing protein 4 (GPATCH4) from Homo sapiens (Human).